Reading from the N-terminus, the 311-residue chain is Dihydroorotate dehydrogenase A (fumarate) (311 aa).

FMN contacts are provided by residues S19 and 43–44 (KS). Residues K43, 67-71 (NSMGL), and N127 contribute to the substrate site. N127 lines the FMN pocket. C130 (nucleophile) is an active-site residue. K164 and V192 together coordinate FMN. Position 193–194 (193–194 (NS)) interacts with substrate. FMN contacts are provided by residues G221, 249-250 (GG), and 271-272 (GT).

It belongs to the dihydroorotate dehydrogenase family. Type 1 subfamily. In terms of assembly, homodimer. It depends on FMN as a cofactor.

The protein resides in the cytoplasm. It catalyses the reaction (S)-dihydroorotate + fumarate = orotate + succinate. Its pathway is pyrimidine metabolism; UMP biosynthesis via de novo pathway. In terms of biological role, catalyzes the conversion of dihydroorotate to orotate with fumarate as the electron acceptor. This chain is Dihydroorotate dehydrogenase A (fumarate) (pyrDA), found in Lactococcus lactis subsp. cremoris (Streptococcus cremoris).